Reading from the N-terminus, the 208-residue chain is Guanylate kinase (208 aa).

The Guanylate kinase-like domain occupies 4 to 181 (GLLIVISGPS…AVEKIQSIIS (178 aa)). Position 11–18 (11–18 (GPSGTGKG)) interacts with ATP.

Belongs to the guanylate kinase family.

Its subcellular location is the cytoplasm. The catalysed reaction is GMP + ATP = GDP + ADP. Functionally, essential for recycling GMP and indirectly, cGMP. This chain is Guanylate kinase, found in Clostridium tetani (strain Massachusetts / E88).